The sequence spans 400 residues: Diphosphomevalonate decarboxylase (400 aa).

Residues 19-22 (YWGK), Arg75, 154-159 (SGSACR), and Thr210 each bind (R)-5-diphosphomevalonate. The tract at residues 381-400 (DGPRTLGPEEALLSPDGLPK) is disordered.

It belongs to the diphosphomevalonate decarboxylase family.

The catalysed reaction is (R)-5-diphosphomevalonate + ATP = isopentenyl diphosphate + ADP + phosphate + CO2. It functions in the pathway isoprenoid biosynthesis; isopentenyl diphosphate biosynthesis via mevalonate pathway; isopentenyl diphosphate from (R)-mevalonate: step 3/3. Diphosphomevalonate decarboxylase; part of the second module of ergosterol biosynthesis pathway that includes the middle steps of the pathway. The second module involves the formation of farnesyl diphosphate, which is also an important intermediate in the biosynthesis of ubiquinone, dolichol, heme and prenylated proteins. This module also plays a key role in the biosynthesis of triterpenes such as ganoderic acids (GA), a group of highly oxygenated lanostane-type triterpenoids which are well recognized as a main group of unique bioactive compounds in the medicinal mushroom Ganoderma lucidum. Activity by the mevalonate kinase first converts mevalonate into 5-phosphomevalonate. 5-phosphomevalonate is then further converted to 5-diphosphomevalonate by the phosphomevalonate kinase. The diphosphomevalonate decarboxylase MVD then produces isopentenyl diphosphate. The isopentenyl-diphosphate delta-isomerase then catalyzes the 1,3-allylic rearrangement of the homoallylic substrate isopentenyl (IPP) to its highly electrophilic allylic isomer, dimethylallyl diphosphate (DMAPP). Finally the farnesyl diphosphate synthase FPS catalyzes the sequential condensation of isopentenyl pyrophosphate with dimethylallyl pyrophosphate, and then with the resultant geranylpyrophosphate to the ultimate product farnesyl pyrophosphate. The protein is Diphosphomevalonate decarboxylase of Ganoderma lucidum (Ling zhi medicinal fungus).